The sequence spans 323 residues: Cysteine synthase A (323 aa).

Residues Asn8 and Arg35 each contribute to the hydrogen sulfide site. Lys42 carries the post-translational modification N6-(pyridoxal phosphate)lysine. Pyridoxal 5'-phosphate-binding positions include Asn72 and Gly177–Thr181. Hydrogen sulfide is bound at residue Leu269. A pyridoxal 5'-phosphate-binding site is contributed by Ser273.

This sequence belongs to the cysteine synthase/cystathionine beta-synthase family. As to quaternary structure, homodimer. It depends on pyridoxal 5'-phosphate as a cofactor.

It carries out the reaction O-acetyl-L-serine + hydrogen sulfide = L-cysteine + acetate. It functions in the pathway amino-acid biosynthesis; L-cysteine biosynthesis; L-cysteine from L-serine: step 2/2. In terms of biological role, two cysteine synthase enzymes are found. Both catalyze the same reaction. Cysteine synthase B can also use thiosulfate in place of sulfide to give cysteine thiosulfonate as a product. The protein is Cysteine synthase A (cysK) of Salmonella typhi.